A 343-amino-acid chain; its full sequence is Ubiquitin thioesterase OTU1 (343 aa).

Residues 45–123 (RCKAKGGTHL…IVEEDQTRPK (79 aa)) are UBX-like. An OTU domain is found at 144-269 (LTRTAVPADN…GIHYDPLQRN (126 aa)). Positions 149-155 (VPADNSC) are cys-loop. Asp-152 is a catalytic residue. Catalysis depends on Cys-155, which acts as the Nucleophile. The tract at residues 208–218 (IRRDDTWGGAI) is variable-loop. The segment at 258–262 (YDGIH) is his-loop. Residue Ile-261 coordinates substrate. Residue His-262 is part of the active site. An S2 site region spans residues 286–291 (DIVLVQ). A C2H2-type zinc finger spans residues 313–337 (LRCMICQKGLTGQAEARDHARETGH). The active site involves His-337.

Interacts with VCP; the interaction is direct. Interacts with FAF2/UBXD8. Interacts with DERL1; however interaction is dependent on the UBAX-like region, suggesting that it may be indirect. Interacts with PLAA, UBXN6 and VCP; may form a complex involved in macroautophagy.

It localises to the cytoplasm. It carries out the reaction Thiol-dependent hydrolysis of ester, thioester, amide, peptide and isopeptide bonds formed by the C-terminal Gly of ubiquitin (a 76-residue protein attached to proteins as an intracellular targeting signal).. In terms of biological role, hydrolase that can remove conjugated ubiquitin from proteins and participates in endoplasmic reticulum-associated degradation (ERAD) for misfolded lumenal proteins. May act by triming the ubiquitin chain on the associated substrate to facilitate their threading through the VCP/p97 pore. Ubiquitin moieties on substrates may present a steric impediment to the threading process when the substrate is transferred to the VCP pore and threaded through VCP's axial channel. Mediates deubiquitination of 'Lys-27'-, 'Lys-29'- and 'Lys-33'-linked polyubiquitin chains. Also able to hydrolyze 'Lys-11'-linked ubiquitin chains. Cleaves both polyubiquitin and di-ubiquitin. May play a role in macroautophagy, regulating for instance the clearance of damaged lysosomes. May recruit PLAA, UBXN6 and VCP to damaged lysosome membranes decorated with K48-linked ubiquitin chains and remove these chains allowing autophagosome formation. The chain is Ubiquitin thioesterase OTU1 (Yod1) from Mus musculus (Mouse).